The primary structure comprises 480 residues: Cysteine--tRNA ligase (480 aa).

Cys-27 contacts Zn(2+). Residues 29–39 (PTVYNYAHIGN) carry the 'HIGH' region motif. Zn(2+)-binding residues include Cys-221, His-246, and Glu-250. A 'KMSKS' region motif is present at residues 278 to 282 (KMSKS). Residue Lys-281 coordinates ATP.

Belongs to the class-I aminoacyl-tRNA synthetase family. As to quaternary structure, monomer. It depends on Zn(2+) as a cofactor.

It is found in the cytoplasm. It catalyses the reaction tRNA(Cys) + L-cysteine + ATP = L-cysteinyl-tRNA(Cys) + AMP + diphosphate. The chain is Cysteine--tRNA ligase from Borreliella burgdorferi (strain ZS7) (Borrelia burgdorferi).